A 100-amino-acid chain; its full sequence is Urease subunit gamma (100 aa).

The protein belongs to the urease gamma subunit family. In terms of assembly, heterotrimer of UreA (gamma), UreB (beta) and UreC (alpha) subunits. Three heterotrimers associate to form the active enzyme.

Its subcellular location is the cytoplasm. The catalysed reaction is urea + 2 H2O + H(+) = hydrogencarbonate + 2 NH4(+). The protein operates within nitrogen metabolism; urea degradation; CO(2) and NH(3) from urea (urease route): step 1/1. The sequence is that of Urease subunit gamma from Corynebacterium urealyticum (strain ATCC 43042 / DSM 7109).